Consider the following 728-residue polypeptide: 1,4-alpha-glucan branching enzyme GlgB (728 aa).

The active-site Nucleophile is the D409. The Proton donor role is filled by E462.

The protein belongs to the glycosyl hydrolase 13 family. GlgB subfamily. Monomer.

It catalyses the reaction Transfers a segment of a (1-&gt;4)-alpha-D-glucan chain to a primary hydroxy group in a similar glucan chain.. The protein operates within glycan biosynthesis; glycogen biosynthesis. Catalyzes the formation of the alpha-1,6-glucosidic linkages in glycogen by scission of a 1,4-alpha-linked oligosaccharide from growing alpha-1,4-glucan chains and the subsequent attachment of the oligosaccharide to the alpha-1,6 position. The protein is 1,4-alpha-glucan branching enzyme GlgB of Cereibacter sphaeroides (strain ATCC 17023 / DSM 158 / JCM 6121 / CCUG 31486 / LMG 2827 / NBRC 12203 / NCIMB 8253 / ATH 2.4.1.) (Rhodobacter sphaeroides).